Here is a 255-residue protein sequence, read N- to C-terminus: 5'-nucleotidase SurE (255 aa).

The a divalent metal cation site is built by Asp11, Asp12, Ser43, and Asn99.

This sequence belongs to the SurE nucleotidase family. It depends on a divalent metal cation as a cofactor.

The protein localises to the cytoplasm. The enzyme catalyses a ribonucleoside 5'-phosphate + H2O = a ribonucleoside + phosphate. Functionally, nucleotidase that shows phosphatase activity on nucleoside 5'-monophosphates. This Caldanaerobacter subterraneus subsp. tengcongensis (strain DSM 15242 / JCM 11007 / NBRC 100824 / MB4) (Thermoanaerobacter tengcongensis) protein is 5'-nucleotidase SurE.